Reading from the N-terminus, the 600-residue chain is NADH-quinone oxidoreductase subunit C/D (600 aa).

The NADH dehydrogenase I subunit C stretch occupies residues 1–190; it reads MVNNMTDLTA…SPFELTKAKQ (190 aa). The NADH dehydrogenase I subunit D stretch occupies residues 214–600; the sequence is DFMFLNLGPN…IDFVMSDVDR (387 aa).

In the N-terminal section; belongs to the complex I 30 kDa subunit family. It in the C-terminal section; belongs to the complex I 49 kDa subunit family. NDH-1 is composed of 13 different subunits. Subunits NuoB, CD, E, F, and G constitute the peripheral sector of the complex.

The protein resides in the cell inner membrane. It catalyses the reaction a quinone + NADH + 5 H(+)(in) = a quinol + NAD(+) + 4 H(+)(out). In terms of biological role, NDH-1 shuttles electrons from NADH, via FMN and iron-sulfur (Fe-S) centers, to quinones in the respiratory chain. The immediate electron acceptor for the enzyme in this species is believed to be ubiquinone. Couples the redox reaction to proton translocation (for every two electrons transferred, four hydrogen ions are translocated across the cytoplasmic membrane), and thus conserves the redox energy in a proton gradient. The chain is NADH-quinone oxidoreductase subunit C/D from Shigella boydii serotype 18 (strain CDC 3083-94 / BS512).